Consider the following 387-residue polypeptide: Decapping nuclease RAI1 (387 aa).

Glu172 contacts a divalent metal cation. The residue at position 198 (Ser198) is a Phosphoserine. Residue Glu221 participates in substrate binding. 3 residues coordinate a divalent metal cation: Asp223, Glu241, and Leu242. Residues Lys243 and Gln267 each coordinate substrate. The interval 273 to 387 (IPRIIYGFKD…GFKEWRKSLK (115 aa)) is interaction with RAT1.

Belongs to the DXO/Dom3Z family. In terms of assembly, interacts with RAT1, RTT103 and pre-60S ribosomal subunits. Interacts with RAT1; the interaction is direct, stabilizes RAT1 protein structure and stimulates its exoribonuclease activity. The interaction also stimulates RAI1 pyrophosphohydrolase activity, probably by recruiting it to mRNA substrates. It depends on a divalent metal cation as a cofactor.

It localises to the nucleus. The catalysed reaction is a 5'-end NAD(+)-phospho-ribonucleoside in mRNA + H2O = a 5'-end phospho-ribonucleoside in mRNA + NAD(+) + H(+). The enzyme catalyses a 5'-end (N(7)-methyl 5'-triphosphoguanosine)-ribonucleoside-ribonucleotide in mRNA + H2O = a (N(7)-methyl 5'-triphosphoguanosine)-nucleoside + a 5'-end phospho-ribonucleoside in mRNA + H(+). It carries out the reaction a 5'-end triphospho-ribonucleoside in mRNA + H2O = a 5'-end phospho-ribonucleoside in mRNA + diphosphate + H(+). In terms of biological role, decapping enzyme for NAD-capped RNAs: specifically hydrolyzes the nicotinamide adenine dinucleotide (NAD) cap from a subset of RNAs by removing the entire NAD moiety from the 5'-end of an NAD-capped RNA. The NAD-cap is present at the 5'-end of some RNAs and snoRNAs. In contrast to the canonical 5'-end N7 methylguanosine (m7G) cap, the NAD cap promotes mRNA decay. Also acts as a non-canonical decapping enzyme that removes the entire cap structure of m7G capped or incompletely capped RNAs. Has decapping activity toward incomplete 5'-end m7G cap mRNAs such as unmethylated 5'-end-capped RNA (cap0), while it has no activity toward 2'-O-ribose methylated m7G cap (cap1). Also possesses RNA 5'-pyrophosphohydrolase activity by hydrolyzing the 5'-end triphosphate to release pyrophosphates. Stimulates exoribonuclease activity of RAT1, allowing it to degrade RNAs with stable secondary structure more effectively. Required for the processing of nuclear mRNA and rRNA precursors. May promote termination of transcription by RNA polymerase II. This is Decapping nuclease RAI1 from Saccharomyces cerevisiae (strain ATCC 204508 / S288c) (Baker's yeast).